Consider the following 226-residue polypeptide: Leucyl/phenylalanyl-tRNA--protein transferase (226 aa).

Belongs to the L/F-transferase family.

The protein localises to the cytoplasm. The enzyme catalyses N-terminal L-lysyl-[protein] + L-leucyl-tRNA(Leu) = N-terminal L-leucyl-L-lysyl-[protein] + tRNA(Leu) + H(+). It carries out the reaction N-terminal L-arginyl-[protein] + L-leucyl-tRNA(Leu) = N-terminal L-leucyl-L-arginyl-[protein] + tRNA(Leu) + H(+). It catalyses the reaction L-phenylalanyl-tRNA(Phe) + an N-terminal L-alpha-aminoacyl-[protein] = an N-terminal L-phenylalanyl-L-alpha-aminoacyl-[protein] + tRNA(Phe). Functionally, functions in the N-end rule pathway of protein degradation where it conjugates Leu, Phe and, less efficiently, Met from aminoacyl-tRNAs to the N-termini of proteins containing an N-terminal arginine or lysine. In Ectopseudomonas mendocina (strain ymp) (Pseudomonas mendocina), this protein is Leucyl/phenylalanyl-tRNA--protein transferase.